Here is a 210-residue protein sequence, read N- to C-terminus: Putative biopolymer transport protein ExbB-like 3 (210 aa).

3 consecutive transmembrane segments (helical) span residues 2–22 (AGGI…ALII), 104–124 (LFQT…ILGL), and 152–172 (LVST…ANVF).

The protein belongs to the ExbB/TolQ family.

Its subcellular location is the cell inner membrane. In terms of biological role, involved in the TonB-dependent energy-dependent transport of various receptor-bound substrates. Protects ExbD from proteolytic degradation and functionally stabilizes TonB. This Synechocystis sp. (strain ATCC 27184 / PCC 6803 / Kazusa) protein is Putative biopolymer transport protein ExbB-like 3.